The following is a 269-amino-acid chain: Seven in absentia homolog 3 (269 aa).

An SIAH-type; degenerate zinc finger spans residues 61 to 132 (GSFHPHHLSH…VVPHLRQIHR (72 aa)). Zn(2+) is bound by residues Cys-107, Cys-114, His-126, and His-131.

This sequence belongs to the SINA (Seven in absentia) family.

Its subcellular location is the mitochondrion. Functionally, negative regulator of PRKN translocation to damaged mitochondria. Acts probably by destabilizing PINK1 protein, hence inhibiting PRKN targeting to dysfunctional depolarized mitochondria. This is Seven in absentia homolog 3 (SIAH3) from Homo sapiens (Human).